The chain runs to 67 residues: Conotoxin Cl6.6b (67 aa).

A signal peptide spans 1–24; the sequence is MKLTCVLIAAVLLLAVCQLDSADA. The propeptide occupies 25 to 37; it reads TGYMRKNPSLRSP. 3 cysteine pairs are disulfide-bonded: Cys-43–Cys-57, Cys-50–Cys-61, and Cys-56–Cys-65.

The protein belongs to the conotoxin O1 superfamily. In terms of tissue distribution, expressed by the venom duct.

It is found in the secreted. The chain is Conotoxin Cl6.6b from Californiconus californicus (California cone).